The chain runs to 141 residues: Large ribosomal subunit protein uL11 (141 aa).

Belongs to the universal ribosomal protein uL11 family. As to quaternary structure, part of the ribosomal stalk of the 50S ribosomal subunit. Interacts with L10 and the large rRNA to form the base of the stalk. L10 forms an elongated spine to which L12 dimers bind in a sequential fashion forming a multimeric L10(L12)X complex. Post-translationally, one or more lysine residues are methylated.

Its function is as follows. Forms part of the ribosomal stalk which helps the ribosome interact with GTP-bound translation factors. The chain is Large ribosomal subunit protein uL11 from Maridesulfovibrio salexigens (strain ATCC 14822 / DSM 2638 / NCIMB 8403 / VKM B-1763) (Desulfovibrio salexigens).